We begin with the raw amino-acid sequence, 183 residues long: Ribulose bisphosphate carboxylase small subunit, chloroplastic 4 (183 aa).

The N-terminal 57 residues, 1–57, are a transit peptide targeting the chloroplast; it reads MASSLMSNAATTMAAATTTAQANMVAPFNGLKSISAFPVTRKNNDITSVASNGGRVQ.

It belongs to the RuBisCO small chain family. Heterohexadecamer of 8 large and 8 small subunits.

The protein resides in the plastid. Its subcellular location is the chloroplast. RuBisCO catalyzes two reactions: the carboxylation of D-ribulose 1,5-bisphosphate, the primary event in carbon dioxide fixation, as well as the oxidative fragmentation of the pentose substrate. Both reactions occur simultaneously and in competition at the same active site. Although the small subunit is not catalytic it is essential for maximal activity. This chain is Ribulose bisphosphate carboxylase small subunit, chloroplastic 4, found in Mesembryanthemum crystallinum (Common ice plant).